A 410-amino-acid chain; its full sequence is Acetate kinase (410 aa).

Asparagine 7 is a binding site for Mg(2+). Lysine 14 is an ATP binding site. Arginine 98 contributes to the substrate binding site. Catalysis depends on aspartate 155, which acts as the Proton donor/acceptor. ATP is bound by residues 215–219 (HLGNG), 290–292 (DMR), and 338–342 (GIGEN). Mg(2+) is bound at residue glutamate 392.

This sequence belongs to the acetokinase family. As to quaternary structure, homodimer. Mg(2+) serves as cofactor. It depends on Mn(2+) as a cofactor.

It is found in the cytoplasm. It catalyses the reaction acetate + ATP = acetyl phosphate + ADP. It participates in metabolic intermediate biosynthesis; acetyl-CoA biosynthesis; acetyl-CoA from acetate: step 1/2. Its function is as follows. Catalyzes the formation of acetyl phosphate from acetate and ATP. Can also catalyze the reverse reaction. The protein is Acetate kinase of Kocuria rhizophila (strain ATCC 9341 / DSM 348 / NBRC 103217 / DC2201).